The sequence spans 165 residues: V-type proton ATPase 16 kDa proteolipid subunit (165 aa).

Over 1-10 (MSSTFSGDET) the chain is Lumenal. Residues 11–33 (APFFGFLGAAAALVFSCMGAAYG) traverse the membrane as a helical segment. The Cytoplasmic segment spans residues 34–55 (TAKSGVGVASMGVMRPELVMKS). The chain crosses the membrane as a helical span at residues 56–76 (IVPVVMAGVLGIYGLIIAVII). The Lumenal portion of the chain corresponds to 77–95 (STGINPKAKSYYLFDGYAH). Residues 96–117 (LSSGLACGLAGLSAGMAIGIVG) form a helical membrane-spanning segment. Residues 118 to 129 (DAGVRANAQQPK) lie on the Cytoplasmic side of the membrane. The chain crosses the membrane as a helical span at residues 130-155 (LFVGMILILIFAEALALYGLIVGIIL). Topologically, residues 156 to 165 (SSRAGQSRAE) are lumenal.

This sequence belongs to the V-ATPase proteolipid subunit family. As to quaternary structure, V-ATPase is a heteromultimeric enzyme composed of a peripheral catalytic V1 complex (main components: subunits A, B, C, D, E, and F) attached to an integral membrane V0 proton pore complex (main component: the proteolipid protein; which is present as a hexamer that forms the proton-conducting pore).

It localises to the vacuole membrane. Functionally, proton-conducting pore forming subunit of the membrane integral V0 complex of vacuolar ATPase. V-ATPase is responsible for acidifying a variety of intracellular compartments in eukaryotic cells. The sequence is that of V-type proton ATPase 16 kDa proteolipid subunit (CVA16-2) from Gossypium hirsutum (Upland cotton).